The primary structure comprises 194 residues: dCTP deaminase, dUMP-forming (194 aa).

DCTP-binding positions include 104–109 (RSSLGR), Asp122, 130–132 (TLE), Gln151, Tyr165, Lys172, and Gln176. Glu132 acts as the Proton donor/acceptor in catalysis.

It belongs to the dCTP deaminase family. Homotrimer.

The catalysed reaction is dCTP + 2 H2O = dUMP + NH4(+) + diphosphate. The protein operates within pyrimidine metabolism; dUMP biosynthesis; dUMP from dCTP: step 1/1. Bifunctional enzyme that catalyzes both the deamination of dCTP to dUTP and the hydrolysis of dUTP to dUMP without releasing the toxic dUTP intermediate. The polypeptide is dCTP deaminase, dUMP-forming (Dictyoglomus turgidum (strain DSM 6724 / Z-1310)).